Here is a 323-residue protein sequence, read N- to C-terminus: Serine/threonine-protein kinase-transforming protein raf (323 aa).

Residues 24–284 enclose the Protein kinase domain; that stretch reads VMLSTRIGSG…PQILSSIELL (261 aa). ATP contacts are provided by residues 30–38 and K50; that span reads IGSGSFGTV. D143 acts as the Proton acceptor in catalysis.

This sequence belongs to the protein kinase superfamily. TKL Ser/Thr protein kinase family. RAF subfamily.

It catalyses the reaction L-seryl-[protein] + ATP = O-phospho-L-seryl-[protein] + ADP + H(+). The enzyme catalyses L-threonyl-[protein] + ATP = O-phospho-L-threonyl-[protein] + ADP + H(+). The polypeptide is Serine/threonine-protein kinase-transforming protein raf (V-RAF) (Murine sarcoma virus 3611).